Consider the following 276-residue polypeptide: MKLKFSKMHGLGNDFMVIDGVRQTVSLTPEQIRLLGNRQLGIGFDQLLLVEPAREAGHDFRYRIFNNDGGEVEQCGNGARCFAKFVRDQGLTGKSRIEVETARGVIAPEYLGDGLARVDMGVPRFRPADLPFLADAEALTYSLPLPEGRCEIGIASMGNPHAVQRVDDVDAAPVAEVGPAIESHPAFPQRVNAGFMQIVNRGEIRLRVYERGAGETLACGTGACAAVVCGIRQGLLDARVTVHARGGDIVIEWAGEGSPVIMTGPAVTVFQGEIEL.

Substrate-binding residues include N13, Q46, and N66. Residue C75 is the Proton donor of the active site. Substrate is bound by residues 76–77 (GN), N159, N192, and 210–211 (ER). The active-site Proton acceptor is the C219. 220 to 221 (GT) lines the substrate pocket.

This sequence belongs to the diaminopimelate epimerase family. As to quaternary structure, homodimer.

It is found in the cytoplasm. It catalyses the reaction (2S,6S)-2,6-diaminopimelate = meso-2,6-diaminopimelate. The protein operates within amino-acid biosynthesis; L-lysine biosynthesis via DAP pathway; DL-2,6-diaminopimelate from LL-2,6-diaminopimelate: step 1/1. In terms of biological role, catalyzes the stereoinversion of LL-2,6-diaminopimelate (L,L-DAP) to meso-diaminopimelate (meso-DAP), a precursor of L-lysine and an essential component of the bacterial peptidoglycan. The chain is Diaminopimelate epimerase from Chromobacterium violaceum (strain ATCC 12472 / DSM 30191 / JCM 1249 / CCUG 213 / NBRC 12614 / NCIMB 9131 / NCTC 9757 / MK).